Reading from the N-terminus, the 473-residue chain is Phosphatidylserine synthase 1 (473 aa).

A2 carries the post-translational modification N-acetylalanine. Residues 2-35 (ASCVGSRTLSKDDVNYRMHFRMINEQQVEDITID) are Cytoplasmic-facing. Residues 36–56 (FFYRPHTITLLSFTIISLMYF) form a helical membrane-spanning segment. The Lumenal segment spans residues 57–72 (AFTRDDSVPEDNIWRG). A helical membrane pass occupies residues 73–93 (ILSVIFFFLIISVLAFPNGPF). Residues 94–102 (TRPHPALWR) are Cytoplasmic-facing. Residues 103–123 (MVFGLSVLYFLFLVFLLFLNF) form a helical membrane-spanning segment. At 124–186 (EQVKSLMYWL…AMKALLIRSY (63 aa)) the chain is on the lumenal side. A helical membrane pass occupies residues 187–207 (GLCWTISITWELTELFFMHLL). Residues 208–216 (PNFAECWWD) are Cytoplasmic-facing. A helical transmembrane segment spans residues 217-237 (QVILDILLCNGGGIWLGMVVC). Residues 238 to 286 (RFLEMRTYHWASFKDIHTTTGKIKRAVLQFTPASWTYVRWFDPKSSFQR) lie on the Lumenal side of the membrane. The chain crosses the membrane as a helical span at residues 287–307 (VAGIYLFMIIWQLTELNTFFL). At 308–319 (KHIFVFQASHPL) the chain is on the cytoplasmic side. Residues 320–342 (SWGRILFIGCITAPTVRQYYAYL) traverse the membrane as a helical segment. Topologically, residues 343–355 (TDTQCKRVGTQCW) are lumenal. The chain crosses the membrane as a helical span at residues 356–376 (VFGVIGFLEAIVCIKFGQDLF). Over 377–383 (SKTQILY) the chain is Cytoplasmic. Residues 384-404 (VMLWLLCVAFTTFLCLYGMVW) form a helical membrane-spanning segment. At 405–473 (YAEHYGHREK…SKVTNGVGKK (69 aa)) the chain is on the lumenal side. A phosphoserine mark is found at S417, S425, S442, and S454. The disordered stretch occupies residues 428-473 (ISWHHGKGSKGSEDSPPKHSSNHESHSSRRRNRHSKSKVTNGVGKK). Positions 437 to 454 (KGSEDSPPKHSSNHESHS) are enriched in basic and acidic residues. The span at 455-464 (SRRRNRHSKS) shows a compositional bias: basic residues.

Belongs to the phosphatidyl serine synthase family. Expressed in kidney, testis, lung, skeletal muscle, liver brain, heart and spleen with highest expression in testis, liver, heart and brain.

The protein localises to the endoplasmic reticulum membrane. The catalysed reaction is a 1,2-diacyl-sn-glycero-3-phosphoethanolamine + L-serine = a 1,2-diacyl-sn-glycero-3-phospho-L-serine + ethanolamine. It carries out the reaction a 1,2-diacyl-sn-glycero-3-phosphocholine + L-serine = a 1,2-diacyl-sn-glycero-3-phospho-L-serine + choline. It functions in the pathway phospholipid metabolism; phosphatidylserine biosynthesis. Its activity is regulated as follows. Potently inhibited by choline in the mitochondria-associated membrane (MAM). Very little inhibition by choline in the endoplasmic reticulum (ER) per se. Catalyzes a base-exchange reaction in which the polar head group of phosphatidylethanolamine (PE) or phosphatidylcholine (PC) is replaced by L-serine. Catalyzes mainly the conversion of phosphatidylcholine. Also converts, in vitro and to a lesser extent, phosphatidylethanolamine. This is Phosphatidylserine synthase 1 (Ptdss1) from Mus musculus (Mouse).